The primary structure comprises 110 residues: Large ribosomal subunit protein uL22 (110 aa).

Belongs to the universal ribosomal protein uL22 family. Part of the 50S ribosomal subunit.

Functionally, this protein binds specifically to 23S rRNA; its binding is stimulated by other ribosomal proteins, e.g. L4, L17, and L20. It is important during the early stages of 50S assembly. It makes multiple contacts with different domains of the 23S rRNA in the assembled 50S subunit and ribosome. The globular domain of the protein is located near the polypeptide exit tunnel on the outside of the subunit, while an extended beta-hairpin is found that lines the wall of the exit tunnel in the center of the 70S ribosome. This chain is Large ribosomal subunit protein uL22, found in Marinomonas sp. (strain MWYL1).